Reading from the N-terminus, the 1054-residue chain is CCAAT/enhancer-binding protein zeta (1054 aa).

Basic and acidic residues predominate over residues Met1 to Glu20. Disordered regions lie at residues Met1–Leu42 and Val102–Lys160. The segment covering Ala21–Ser34 has biased composition (acidic residues). The span at Glu109 to Ile120 shows a compositional bias: basic and acidic residues. The residue at position 113 (Ser113) is a Phosphoserine. Polar residues predominate over residues Asn124 to Lys138. A Phosphoserine modification is found at Ser629. Lys695 is modified (N6-acetyllysine). Ser835 bears the Phosphoserine mark. 2 disordered regions span residues Arg873–Ser902 and Asp915–Asn969. Acidic residues-rich tracts occupy residues Leu882 to Ser902 and Asp915 to Pro933. A phosphoserine mark is found at Ser959, Ser973, and Ser978. A disordered region spans residues Ile1031–Lys1054.

It belongs to the CBF/MAK21 family.

The protein localises to the nucleus. In terms of biological role, stimulates transcription from the HSP70 promoter. This Homo sapiens (Human) protein is CCAAT/enhancer-binding protein zeta (CEBPZ).